The following is a 254-amino-acid chain: Glutamate racemase (254 aa).

Residues 7-8 (DS) and 39-40 (YG) each bind substrate. The active-site Proton donor/acceptor is Cys-70. 71–72 (NT) contacts substrate. Cys-178 functions as the Proton donor/acceptor in the catalytic mechanism. Residue 179–180 (TH) coordinates substrate.

Belongs to the aspartate/glutamate racemases family.

It catalyses the reaction L-glutamate = D-glutamate. The protein operates within cell wall biogenesis; peptidoglycan biosynthesis. Its function is as follows. Provides the (R)-glutamate required for cell wall biosynthesis. This is Glutamate racemase from Aquifex aeolicus (strain VF5).